The sequence spans 77 residues: U14-theraphotoxin-Cg1a 2 (77 aa).

Positions 1 to 21 (MKTSVLLVILGIAAITVQCTA) are cleaved as a signal peptide. A propeptide spanning residues 22–49 (SESVKQDSLRTFVDAVLGWNAEMASEAR) is cleaved from the precursor. 3 disulfide bridges follow: Cys50/Cys64, Cys57/Cys69, and Cys63/Cys75. Lys77 is subject to Lysine amide.

Belongs to the neurotoxin 10 (Hwtx-1) family. 65 (Jztx-21) subfamily. As to expression, expressed by the venom gland.

It is found in the secreted. Probable ion channel inhibitor. The sequence is that of U14-theraphotoxin-Cg1a 2 from Chilobrachys guangxiensis (Chinese earth tiger tarantula).